Consider the following 878-residue polypeptide: Alanine--tRNA ligase (878 aa).

Zn(2+) is bound by residues histidine 567, histidine 571, cysteine 669, and histidine 673.

This sequence belongs to the class-II aminoacyl-tRNA synthetase family. Requires Zn(2+) as cofactor.

Its subcellular location is the cytoplasm. It catalyses the reaction tRNA(Ala) + L-alanine + ATP = L-alanyl-tRNA(Ala) + AMP + diphosphate. In terms of biological role, catalyzes the attachment of alanine to tRNA(Ala) in a two-step reaction: alanine is first activated by ATP to form Ala-AMP and then transferred to the acceptor end of tRNA(Ala). Also edits incorrectly charged Ser-tRNA(Ala) and Gly-tRNA(Ala) via its editing domain. The chain is Alanine--tRNA ligase from Rickettsia felis (strain ATCC VR-1525 / URRWXCal2) (Rickettsia azadi).